The following is a 205-amino-acid chain: MVKIKVCGIRREEDIEIVNKYKPNYVGFVFAKSKRQVDMYKAEKLADKLDVSIKKVGVFVNEDIEKVKEVSFRVKLDIVQLHGDENEEYIDKLKGFKVWKAVNVTAGKDVEKFKNYRIDAFLVDGYDGTNRGGTGKSFNWNLLKENQDKILKPIIAAGGLNIDNVEKCIEVLNPFAVDVSSGVETDGFKDEEKIKKFIMRVRKFK.

This sequence belongs to the TrpF family.

It catalyses the reaction N-(5-phospho-beta-D-ribosyl)anthranilate = 1-(2-carboxyphenylamino)-1-deoxy-D-ribulose 5-phosphate. The protein operates within amino-acid biosynthesis; L-tryptophan biosynthesis; L-tryptophan from chorismate: step 3/5. The sequence is that of N-(5'-phosphoribosyl)anthranilate isomerase from Clostridium acetobutylicum (strain ATCC 824 / DSM 792 / JCM 1419 / IAM 19013 / LMG 5710 / NBRC 13948 / NRRL B-527 / VKM B-1787 / 2291 / W).